Here is a 243-residue protein sequence, read N- to C-terminus: UPF0246 protein Spy49_1742 (243 aa).

It belongs to the UPF0246 family.

The polypeptide is UPF0246 protein Spy49_1742 (Streptococcus pyogenes serotype M49 (strain NZ131)).